The primary structure comprises 352 residues: Tropomodulin-3 (352 aa).

Residue serine 25 is modified to Phosphoserine.

The protein belongs to the tropomodulin family. Binds to the N-terminus of tropomyosin and to actin. Interacts with FLII. In terms of tissue distribution, ubiquitous.

The protein resides in the cytoplasm. Its subcellular location is the cytoskeleton. Its function is as follows. Blocks the elongation and depolymerization of the actin filaments at the pointed end. The Tmod/TM complex contributes to the formation of the short actin protofilament, which in turn defines the geometry of the membrane skeleton. In Homo sapiens (Human), this protein is Tropomodulin-3 (TMOD3).